The sequence spans 454 residues: Protein phosphatase 1F (454 aa).

The span at 1-12 (MSSGAPQKSSPM) shows a compositional bias: polar residues. The tract at residues 1–28 (MSSGAPQKSSPMASGAEETPGFLDTLLQ) is disordered. A PPM-type phosphatase domain is found at 156 to 413 (LVSIHAIRNT…DNITVMVVFL (258 aa)). The Mn(2+) site is built by Asp198, Gly199, Asp360, and Asp404. Residues 419–454 (LLEGGNQGEGDPQAEGRRQDLPSSLPEPETQAPPRS) are disordered. A Phosphoserine modification is found at Ser454.

It belongs to the PP2C family. As to quaternary structure, associates with FEM1B. It depends on Mg(2+) as a cofactor. Mn(2+) is required as a cofactor.

It catalyses the reaction O-phospho-L-seryl-[protein] + H2O = L-seryl-[protein] + phosphate. It carries out the reaction O-phospho-L-threonyl-[protein] + H2O = L-threonyl-[protein] + phosphate. Functionally, dephosphorylates and concomitantly deactivates CaM-kinase II activated upon autophosphorylation, and CaM-kinases IV and I activated upon phosphorylation by CaM-kinase kinase. Promotes apoptosis. This is Protein phosphatase 1F (PPM1F) from Homo sapiens (Human).